The primary structure comprises 588 residues: Tripartite motif-containing protein 29 (588 aa).

The tract at residues 1–66 is disordered; sequence MEAADASRSN…GSALKPGEGR (66 aa). 4 positions are modified to phosphoserine: Ser21, Ser28, Ser58, and Ser104. Tyr106 is subject to Phosphotyrosine. Residues 220-260 form a B box-type zinc finger; it reads FEARKCPVHGKTMELFCQTDQTCICYLCMFQEHKNHSTVTV. Positions 225, 228, 247, and 252 each coordinate Zn(2+). Residues 259–352 adopt a coiled-coil conformation; sequence TVEEAKAEKE…VKVIMDALDE (94 aa). A Phosphothreonine modification is found at Thr476. The residue at position 489 (Ser489) is a Phosphoserine.

Interacts with VIM and HINT1. Interacts with IKBKG/NEMO. Interacts with STING1. In terms of processing, constitutively phosphorylated by PKC on serine/threonine in A431 cells. Expressed in placenta, prostate and thymus.

The protein resides in the cytoplasm. Its subcellular location is the lysosome. In terms of biological role, plays a crucial role in the regulation of macrophage activation in response to viral or bacterial infections within the respiratory tract. Mechanistically, TRIM29 interacts with IKBKG/NEMO in the lysosome where it induces its 'Lys-48' ubiquitination and subsequent degradation. In turn, the expression of type I interferons and the production of pro-inflammatory cytokines are inhibited. Additionally, induces the 'Lys-48' ubiquitination of STING1 in a similar way, leading to its degradation. This Homo sapiens (Human) protein is Tripartite motif-containing protein 29 (TRIM29).